The following is a 647-amino-acid chain: Methyl-accepting chemotaxis protein McpK (647 aa).

At 1–16 the chain is on the cytoplasmic side; that stretch reads MYDWWVLQLAKLSVSR. A helical transmembrane segment spans residues 17 to 37; that stretch reads KLMVGFGVLLALLLLVVISSN. Residues 38–291 lie on the Periplasmic side of the membrane; the sequence is RTLTHQTALS…LRESTASRDR (254 aa). Positions 45-287 constitute an HBM domain; the sequence is ALSEQLAEVA…AGRQLRESTA (243 aa). A helical membrane pass occupies residues 292–312; the sequence is ASLWLIAALALAFGCVAGWAI. Topologically, residues 313 to 647 are cytoplasmic; that stretch reads NRQIVRPLDE…LQAQVGRFRL (335 aa). One can recognise an HAMP domain in the interval 314–370; sequence RQIVRPLDEALAQAEAIAAGDLGKRPQNPLTLQRRDELGQLQRVMQRMGDSLRELVG. One can recognise a Methyl-accepting transducer domain in the interval 375 to 611; it reads GVSQLASSAE…EINRSVLSVR (237 aa).

It belongs to the methyl-accepting chemotaxis (MCP) protein family. As to quaternary structure, ligand free ligand-binding domain (LBD) is present in a monomer-dimer equilibrium. AlphaKG binding stabilizes the homodimer.

It localises to the cell inner membrane. Its function is as follows. Chemotactic-signal transducers respond to changes in the concentration of attractants and repellents in the environment, transduce a signal from the outside to the inside of the cell, and facilitate sensory adaptation through the variation of the level of methylation. McpK is a chemoreceptor that specifically binds and mediates chemotaxis to alpha-ketoglutarate (alphaKG). This chain is Methyl-accepting chemotaxis protein McpK, found in Pseudomonas aeruginosa (strain ATCC 15692 / DSM 22644 / CIP 104116 / JCM 14847 / LMG 12228 / 1C / PRS 101 / PAO1).